We begin with the raw amino-acid sequence, 70 residues long: DNA gyrase inhibitor YacG (70 aa).

4 residues coordinate Zn(2+): Cys-20, Cys-23, Cys-35, and Cys-39.

This sequence belongs to the DNA gyrase inhibitor YacG family. In terms of assembly, interacts with GyrB. Zn(2+) is required as a cofactor.

Its function is as follows. Inhibits all the catalytic activities of DNA gyrase by preventing its interaction with DNA. Acts by binding directly to the C-terminal domain of GyrB, which probably disrupts DNA binding by the gyrase. This is DNA gyrase inhibitor YacG from Rhizobium leguminosarum bv. trifolii (strain WSM2304).